The primary structure comprises 599 residues: Aspartate--tRNA ligase (599 aa).

L-aspartate is bound at residue Glu-180. An aspartate region spans residues 204 to 207 (QIFK). Arg-226 is an L-aspartate binding site. ATP-binding positions include 226 to 228 (RDE) and Gln-235. His-454 contacts L-aspartate. Glu-488 contacts ATP. Residue Arg-495 coordinates L-aspartate. ATP is bound at residue 540–543 (GLDR).

The protein belongs to the class-II aminoacyl-tRNA synthetase family. Type 1 subfamily. In terms of assembly, homodimer.

Its subcellular location is the cytoplasm. The enzyme catalyses tRNA(Asp) + L-aspartate + ATP = L-aspartyl-tRNA(Asp) + AMP + diphosphate. In terms of biological role, catalyzes the attachment of L-aspartate to tRNA(Asp) in a two-step reaction: L-aspartate is first activated by ATP to form Asp-AMP and then transferred to the acceptor end of tRNA(Asp). The chain is Aspartate--tRNA ligase from Clostridium botulinum (strain Alaska E43 / Type E3).